A 393-amino-acid polypeptide reads, in one-letter code: Actin-related protein 2 (393 aa).

Residues 158-160 (GDG), 212-216 (RQMKE), and 303-308 (GGTTMY) contribute to the ATP site.

The protein belongs to the actin family. ARP2 subfamily. Component of the Arp2/3 complex.

Its subcellular location is the cytoplasm. The protein localises to the cytoskeleton. Functions as ATP-binding component of the Arp2/3 complex which is involved in regulation of actin polymerization and together with an activating nucleation-promoting factor (NPF) mediates the formation of branched actin networks. Seems to contact the pointed end of the daughter actin filament. The polypeptide is Actin-related protein 2 (arx-2) (Caenorhabditis briggsae).